Here is a 98-residue protein sequence, read N- to C-terminus: NADH-ubiquinone oxidoreductase chain 4L (98 aa).

Helical transmembrane passes span 1–21, 29–49, and 61–81; these read MSLVYMNIMMAFTVSLTGLLM, SLLCLEGMMLSLFILATLMIL, and IILLVFAACEAALGLSLLVMV.

It belongs to the complex I subunit 4L family. As to quaternary structure, core subunit of respiratory chain NADH dehydrogenase (Complex I) which is composed of 45 different subunits.

It is found in the mitochondrion inner membrane. It carries out the reaction a ubiquinone + NADH + 5 H(+)(in) = a ubiquinol + NAD(+) + 4 H(+)(out). In terms of biological role, core subunit of the mitochondrial membrane respiratory chain NADH dehydrogenase (Complex I) which catalyzes electron transfer from NADH through the respiratory chain, using ubiquinone as an electron acceptor. Part of the enzyme membrane arm which is embedded in the lipid bilayer and involved in proton translocation. This Ovis aries (Sheep) protein is NADH-ubiquinone oxidoreductase chain 4L (MT-ND4L).